The chain runs to 820 residues: DNA mismatch repair protein MutS (820 aa).

Residue glycine 618 to serine 625 coordinates ATP.

Belongs to the DNA mismatch repair MutS family.

In terms of biological role, this protein is involved in the repair of mismatches in DNA. It is possible that it carries out the mismatch recognition step. This protein has a weak ATPase activity. This is DNA mismatch repair protein MutS from Chlamydia trachomatis serovar A (strain ATCC VR-571B / DSM 19440 / HAR-13).